The following is a 59-amino-acid chain: Large ribosomal subunit protein bL32 (59 aa).

The interval 1-59 is disordered; the sequence is MAVQQNRKSRSRRGMRRSHDALSSAALSIDPTTGEKHRRHHVTPDGFYRGKKVVEVSQD. The segment covering 7–16 has biased composition (basic residues); sequence RKSRSRRGMR.

Belongs to the bacterial ribosomal protein bL32 family.

The sequence is that of Large ribosomal subunit protein bL32 from Hahella chejuensis (strain KCTC 2396).